A 96-amino-acid polypeptide reads, in one-letter code: uncharacterized protein (96 aa).

Residues 1–18 show a composition bias toward basic and acidic residues; that stretch reads MSNVDRYDVHRDGIEKDR. The disordered stretch occupies residues 1–96; that stretch reads MSNVDRYDVH…REQHHQPQKQ (96 aa). The span at 28–46 shows a compositional bias: polar residues; sequence QNGQSQSTMDNRPPWNNDT. Positions 70-96 are enriched in basic and acidic residues; the sequence is TIDRQQEELTKNWTESLREQHHQPQKQ.

This is an uncharacterized protein from Caenorhabditis elegans.